We begin with the raw amino-acid sequence, 262 residues long: 3-methyl-2-oxobutanoate hydroxymethyltransferase (262 aa).

Residues Asp44 and Asp83 each coordinate Mg(2+). Residues 44-45 (DS), Asp83, and Lys112 contribute to the 3-methyl-2-oxobutanoate site. Glu114 serves as a coordination point for Mg(2+). Catalysis depends on Glu177, which acts as the Proton acceptor.

The protein belongs to the PanB family. As to quaternary structure, homodecamer; pentamer of dimers. It depends on Mg(2+) as a cofactor.

It is found in the cytoplasm. It catalyses the reaction 3-methyl-2-oxobutanoate + (6R)-5,10-methylene-5,6,7,8-tetrahydrofolate + H2O = 2-dehydropantoate + (6S)-5,6,7,8-tetrahydrofolate. It functions in the pathway cofactor biosynthesis; coenzyme A biosynthesis. Its function is as follows. Catalyzes the reversible reaction in which hydroxymethyl group from 5,10-methylenetetrahydrofolate is transferred onto alpha-ketoisovalerate to form ketopantoate. The chain is 3-methyl-2-oxobutanoate hydroxymethyltransferase from Metallosphaera sedula (strain ATCC 51363 / DSM 5348 / JCM 9185 / NBRC 15509 / TH2).